We begin with the raw amino-acid sequence, 505 residues long: Lysine--tRNA ligase (505 aa).

Mg(2+)-binding residues include E409 and E416.

This sequence belongs to the class-II aminoacyl-tRNA synthetase family. In terms of assembly, homodimer. Requires Mg(2+) as cofactor.

The protein resides in the cytoplasm. It carries out the reaction tRNA(Lys) + L-lysine + ATP = L-lysyl-tRNA(Lys) + AMP + diphosphate. The protein is Lysine--tRNA ligase of Latilactobacillus sakei subsp. sakei (strain 23K) (Lactobacillus sakei subsp. sakei).